Consider the following 154-residue polypeptide: Protein aau3 (154 aa).

Positions 2-132 (RLTKQTNYAV…QGYTIDDLVK (131 aa)) constitute an HTH rrf2-type domain. The [2Fe-2S] cluster site is built by Cys91, Cys99, and Cys105.

It depends on [2Fe-2S] cluster as a cofactor.

Its function is as follows. Required for growth utilizing PHB cycle intermediates. This Rhizobium meliloti (strain 1021) (Ensifer meliloti) protein is Protein aau3 (aau3).